The sequence spans 485 residues: Glutamate--tRNA ligase (485 aa).

The 'HIGH' region signature appears at 12 to 22 (PSPTGEPHVGT). A 'KMSKS' region motif is present at residues 253–257 (KLSKR). K256 contributes to the ATP binding site.

The protein belongs to the class-I aminoacyl-tRNA synthetase family. Glutamate--tRNA ligase type 1 subfamily. In terms of assembly, monomer.

Its subcellular location is the cytoplasm. It carries out the reaction tRNA(Glu) + L-glutamate + ATP = L-glutamyl-tRNA(Glu) + AMP + diphosphate. In terms of biological role, catalyzes the attachment of glutamate to tRNA(Glu) in a two-step reaction: glutamate is first activated by ATP to form Glu-AMP and then transferred to the acceptor end of tRNA(Glu). The protein is Glutamate--tRNA ligase of Sinorhizobium medicae (strain WSM419) (Ensifer medicae).